The chain runs to 171 residues: MIGWLEAMLRVGRKLFVKAETQLYPEEKPKLYPRSRGRIVLTRDPDGQERCVACNLCAVVCPVGCIDLTKAVADDGRWYPEHFRINFARCIFCGFCEEACPTSAIQLTPDFELGEWRRDALVYEKHDLLISGEGKVRGYRYWSVAGKAIDGKDKGEAEHESPPVDLRGLLP.

4Fe-4S ferredoxin-type domains are found at residues 39–71 (IVLT…LTKA) and 81–110 (EHFR…LTPD). [4Fe-4S] cluster is bound by residues cysteine 51, cysteine 54, cysteine 57, cysteine 61, cysteine 90, cysteine 93, cysteine 96, and cysteine 100.

It belongs to the complex I 23 kDa subunit family. In terms of assembly, NDH-1 is composed of 14 different subunits. Subunits NuoA, H, J, K, L, M, N constitute the membrane sector of the complex. [4Fe-4S] cluster serves as cofactor.

The protein resides in the cell inner membrane. It catalyses the reaction a quinone + NADH + 5 H(+)(in) = a quinol + NAD(+) + 4 H(+)(out). NDH-1 shuttles electrons from NADH, via FMN and iron-sulfur (Fe-S) centers, to quinones in the respiratory chain. The immediate electron acceptor for the enzyme in this species is believed to be ubiquinone. Couples the redox reaction to proton translocation (for every two electrons transferred, four hydrogen ions are translocated across the cytoplasmic membrane), and thus conserves the redox energy in a proton gradient. The sequence is that of NADH-quinone oxidoreductase subunit I 1 from Rhodopseudomonas palustris (strain BisB5).